The sequence spans 220 residues: NAD(P)H-hydrate epimerase (220 aa).

Positions 6–203 (ARHLTTLATG…SFDLPEALFH (198 aa)) constitute a YjeF N-terminal domain. 53–57 (HNGGV) is a binding site for (6S)-NADPHX. K(+) is bound by residues Asn-54 and Asp-116. (6S)-NADPHX is bound by residues 120-126 (GMRLEGP) and Asp-149. Thr-152 is a K(+) binding site.

This sequence belongs to the NnrE/AIBP family. K(+) is required as a cofactor.

The catalysed reaction is (6R)-NADHX = (6S)-NADHX. It carries out the reaction (6R)-NADPHX = (6S)-NADPHX. Catalyzes the epimerization of the S- and R-forms of NAD(P)HX, a damaged form of NAD(P)H that is a result of enzymatic or heat-dependent hydration. This is a prerequisite for the S-specific NAD(P)H-hydrate dehydratase to allow the repair of both epimers of NAD(P)HX. This Truepera radiovictrix (strain DSM 17093 / CIP 108686 / LMG 22925 / RQ-24) protein is NAD(P)H-hydrate epimerase.